Reading from the N-terminus, the 252-residue chain is Putative cytosolic acyl coenzyme A thioester hydrolase-like (252 aa).

HotDog ACOT-type domains lie at 1 to 90 (MIKE…LSLT) and 146 to 252 (SYSQ…SVFT).

In terms of assembly, homodimer. Expressed in all tissues examined. Up-regulated in nasopharyngeal carcinoma (at protein level).

The protein resides in the cytoplasm. It carries out the reaction hexadecanoyl-CoA + H2O = hexadecanoate + CoA + H(+). Functionally, acyl-CoA thioesterases are a group of enzymes that catalyze the hydrolysis of acyl-CoAs to the free fatty acid and coenzyme A (CoASH), providing the potential to regulate intracellular levels of acyl-CoAs, free fatty acids and CoASH. This is Putative cytosolic acyl coenzyme A thioester hydrolase-like (ACOT7L) from Homo sapiens (Human).